A 204-amino-acid chain; its full sequence is 8-oxoguanine DNA glycosylase/AP lyase (204 aa).

Active-site residues include Lys-129 and Asp-147.

Belongs to the type-2 OGG1 family.

The catalysed reaction is 2'-deoxyribonucleotide-(2'-deoxyribose 5'-phosphate)-2'-deoxyribonucleotide-DNA = a 3'-end 2'-deoxyribonucleotide-(2,3-dehydro-2,3-deoxyribose 5'-phosphate)-DNA + a 5'-end 5'-phospho-2'-deoxyribonucleoside-DNA + H(+). In terms of biological role, catalyzes the excision of an oxidatively damaged form of guanine (7,8-dihydro-8-oxoguanine = 8-oxoG) from DNA. Also cleaves the DNA backbone at apurinic/apyrimidinic sites (AP sites). The protein is 8-oxoguanine DNA glycosylase/AP lyase of Thermoplasma acidophilum (strain ATCC 25905 / DSM 1728 / JCM 9062 / NBRC 15155 / AMRC-C165).